A 520-amino-acid chain; its full sequence is GMP synthase [glutamine-hydrolyzing] (520 aa).

Positions 3 to 200 (AIAIIDFGSQ…FLDIANCKRD (198 aa)) constitute a Glutamine amidotransferase type-1 domain. Catalysis depends on C84, which acts as the Nucleophile. Catalysis depends on residues H175 and E177. A GMPS ATP-PPase domain is found at 201-386 (WTMKSFIEEQ…IGLSDEIIFQ (186 aa)). 228–234 (SGGVDSS) contributes to the ATP binding site.

As to quaternary structure, homodimer.

The catalysed reaction is XMP + L-glutamine + ATP + H2O = GMP + L-glutamate + AMP + diphosphate + 2 H(+). The protein operates within purine metabolism; GMP biosynthesis; GMP from XMP (L-Gln route): step 1/1. Catalyzes the synthesis of GMP from XMP. The polypeptide is GMP synthase [glutamine-hydrolyzing] (Wolbachia pipientis wMel).